A 145-amino-acid polypeptide reads, in one-letter code: Small ribosomal subunit protein uS19 (145 aa).

Alanine 2 carries the post-translational modification N-acetylalanine. Lysine 108 participates in a covalent cross-link: Glycyl lysine isopeptide (Lys-Gly) (interchain with G-Cter in SUMO2).

Belongs to the universal ribosomal protein uS19 family. Component of the small ribosomal subunit.

It localises to the cytoplasm. In terms of biological role, component of the small ribosomal subunit. The ribosome is a large ribonucleoprotein complex responsible for the synthesis of proteins in the cell. The chain is Small ribosomal subunit protein uS19 (RPS15) from Mesocricetus auratus (Golden hamster).